The sequence spans 322 residues: DNA-directed RNA polymerase subunit alpha (322 aa).

Positions 1 to 229 (MNFVNNLFTL…KYFDLIFSFI (229 aa)) are alpha N-terminal domain (alpha-NTD). The alpha C-terminal domain (alpha-CTD) stretch occupies residues 244–322 (NLNLKINSVY…NLNSKIEYDL (79 aa)).

It belongs to the RNA polymerase alpha chain family. In terms of assembly, homodimer. The RNAP catalytic core consists of 2 alpha, 1 beta, 1 beta' and 1 omega subunit. When a sigma factor is associated with the core the holoenzyme is formed, which can initiate transcription.

The enzyme catalyses RNA(n) + a ribonucleoside 5'-triphosphate = RNA(n+1) + diphosphate. DNA-dependent RNA polymerase catalyzes the transcription of DNA into RNA using the four ribonucleoside triphosphates as substrates. The sequence is that of DNA-directed RNA polymerase subunit alpha (rpoA) from Carsonella ruddii (strain PV).